A 481-amino-acid chain; its full sequence is Dynein axonemal assembly factor 8 (481 aa).

Disordered regions lie at residues 70-91, 131-233, 306-397, and 415-454; these read DESG…LVPG, LDTK…EGRP, TWKV…PVAS, and RAFR…KKHI. Ser-83, Ser-145, and Ser-147 each carry phosphoserine. Residues 144-155 show a composition bias toward polar residues; the sequence is GSQSPPWSSQGE. Over residues 163-176 the composition is skewed to basic and acidic residues; sequence GKLKTEPSDTDFKN. Over residues 177–188 the composition is skewed to basic residues; sequence SAKRRALRRERR. The span at 198-211 shows a compositional bias: polar residues; the sequence is KVTQAAQNPASGDQ. Residues 310-322 are compositionally biased toward basic and acidic residues; that stretch reads SADKLQDTEEQVA. Over residues 323 to 336 the composition is skewed to polar residues; sequence RTRSASAESGFQTE. Ser-328 carries the phosphoserine modification. Basic and acidic residues-rich tracts occupy residues 337–349 and 359–380; these read RVQK…RLKT and RLTE…HSSS.

It localises to the dynein axonemal particle. It is found in the cytoplasm. In cyliated cells, dynein axonemal particle-specific protein required for deployment of ODA to the axoneme. Interacts with outer dynein arm (ODA) subunits. This is Dynein axonemal assembly factor 8 (Dnaaf8) from Rattus norvegicus (Rat).